The chain runs to 154 residues: 6,7-dimethyl-8-ribityllumazine synthase (154 aa).

5-amino-6-(D-ribitylamino)uracil is bound by residues Trp22, 56 to 58 (AWE), and 80 to 82 (CVI). 85-86 (DT) lines the (2S)-2-hydroxy-3-oxobutyl phosphate pocket. The active-site Proton donor is the His88. Asn113 is a 5-amino-6-(D-ribitylamino)uracil binding site. Residue Arg127 participates in (2S)-2-hydroxy-3-oxobutyl phosphate binding.

Belongs to the DMRL synthase family. In terms of assembly, forms an icosahedral capsid composed of 60 subunits, arranged as a dodecamer of pentamers.

The catalysed reaction is (2S)-2-hydroxy-3-oxobutyl phosphate + 5-amino-6-(D-ribitylamino)uracil = 6,7-dimethyl-8-(1-D-ribityl)lumazine + phosphate + 2 H2O + H(+). The protein operates within cofactor biosynthesis; riboflavin biosynthesis; riboflavin from 2-hydroxy-3-oxobutyl phosphate and 5-amino-6-(D-ribitylamino)uracil: step 1/2. Its function is as follows. Catalyzes the formation of 6,7-dimethyl-8-ribityllumazine by condensation of 5-amino-6-(D-ribitylamino)uracil with 3,4-dihydroxy-2-butanone 4-phosphate. This is the penultimate step in the biosynthesis of riboflavin. The sequence is that of 6,7-dimethyl-8-ribityllumazine synthase from Xanthomonas oryzae pv. oryzae (strain MAFF 311018).